Here is a 168-residue protein sequence, read N- to C-terminus: Large ribosomal subunit protein uL10 (168 aa).

It belongs to the universal ribosomal protein uL10 family. As to quaternary structure, part of the ribosomal stalk of the 50S ribosomal subunit. The N-terminus interacts with L11 and the large rRNA to form the base of the stalk. The C-terminus forms an elongated spine to which L12 dimers bind in a sequential fashion forming a multimeric L10(L12)X complex.

Its function is as follows. Forms part of the ribosomal stalk, playing a central role in the interaction of the ribosome with GTP-bound translation factors. The sequence is that of Large ribosomal subunit protein uL10 from Levilactobacillus brevis (strain ATCC 367 / BCRC 12310 / CIP 105137 / JCM 1170 / LMG 11437 / NCIMB 947 / NCTC 947) (Lactobacillus brevis).